The primary structure comprises 536 residues: Lysosomal acid glucosylceramidase (536 aa).

A signal peptide spans 1-39 (MELSSPSREECPRPQGRVGIMAASLMGLLLLQAASWASG). Cystine bridges form between Cys43–Cys55 and Cys57–Cys62. N-linked (GlcNAc...) asparagine glycosylation is found at Asn58, Asn98, and Asn185. Catalysis depends on Glu274, which acts as the Proton donor. Asn309 carries N-linked (GlcNAc...) asparagine glycosylation. The active-site Nucleophile is Glu379. An N-linked (GlcNAc...) asparagine glycan is attached at Asn501.

The protein belongs to the glycosyl hydrolase 30 family. In terms of assembly, interacts with saposin-C. Interacts with SCARB2. Interacts with TCP1. Interacts with GRN; this interaction prevents aggregation of GBA1-SCARB2 complex via interaction with HSPA1A upon stress.

The protein localises to the lysosome membrane. The catalysed reaction is a beta-D-glucosyl-(1&lt;-&gt;1')-N-acylsphing-4-enine + H2O = an N-acylsphing-4-enine + D-glucose. The enzyme catalyses a beta-D-galactosyl-(1&lt;-&gt;1')-N-acylsphing-4-enine + H2O = an N-acylsphing-4-enine + D-galactose. It catalyses the reaction cholesteryl 3-beta-D-glucoside + H2O = cholesterol + D-glucose. It carries out the reaction a beta-D-glucosyl-(1&lt;-&gt;1')-N-acylsphing-4-enine + cholesterol = cholesteryl 3-beta-D-glucoside + an N-acylsphing-4-enine. The catalysed reaction is beta-D-glucosyl-N-(9Z-octadecenoyl)-sphing-4E-enine + cholesterol = N-(9Z-octadecenoyl)-sphing-4-enine + cholesteryl 3-beta-D-glucoside. The enzyme catalyses beta-D-glucosyl-N-octanoylsphing-4E-enine + cholesterol = N-octanoylsphing-4-enine + cholesteryl 3-beta-D-glucoside. It catalyses the reaction beta-D-glucosyl-N-dodecanoylsphing-4-enine + cholesterol = N-dodecanoylsphing-4-enine + cholesteryl 3-beta-D-glucoside. It carries out the reaction beta-D-glucosyl-(1&lt;-&gt;1)-N-octadecanoylsphing-4-enine + cholesterol = N-octadecanoylsphing-4-enine + cholesteryl 3-beta-D-glucoside. The catalysed reaction is beta-D-glucosyl-(1&lt;-&gt;1')-N-(15Z-tetracosenoyl)-sphing-4-enine + cholesterol = N-(15Z-tetracosenoyl)-sphing-4-enine + cholesteryl 3-beta-D-glucoside. The enzyme catalyses a beta-D-galactosyl-(1&lt;-&gt;1')-N-acylsphing-4-enine + cholesterol = cholesteryl 3-beta-D-galactoside + an N-acylsphing-4-enine. It catalyses the reaction 1-(beta-D-galactosyl)-N-dodecanoylsphing-4-enine + cholesterol = cholesteryl 3-beta-D-galactoside + N-dodecanoylsphing-4-enine. It carries out the reaction a beta-D-xylosyl-(1&lt;-&gt;1')-N-acylsphing-4-enine + cholesterol = cholesteryl 3-beta-D-xyloside + an N-acylsphing-4-enine. The catalysed reaction is beta-D-xylosyl-(1&lt;-&gt;1')-N-(9Z-octadecenoyl)-sphing-4-enine + cholesterol = cholesteryl 3-beta-D-xyloside + N-(9Z-octadecenoyl)-sphing-4-enine. The protein operates within steroid metabolism; cholesterol metabolism. It functions in the pathway sphingolipid metabolism. Glucosylceramidase that catalyzes, within the lysosomal compartment, the hydrolysis of glucosylceramides/GlcCers (such as beta-D-glucosyl-(1&lt;-&gt;1')-N-acylsphing-4-enine) into free ceramides (such as N-acylsphing-4-enine) and glucose. Plays a central role in the degradation of complex lipids and the turnover of cellular membranes. Through the production of ceramides, participates in the PKC-activated salvage pathway of ceramide formation. Catalyzes the glucosylation of cholesterol, through a transglucosylation reaction where glucose is transferred from GlcCer to cholesterol. GlcCer containing mono-unsaturated fatty acids (such as beta-D-glucosyl-N-(9Z-octadecenoyl)-sphing-4-enine) are preferred as glucose donors for cholesterol glucosylation when compared with GlcCer containing same chain length of saturated fatty acids (such as beta-D-glucosyl-N-octadecanoyl-sphing-4-enine). Under specific conditions, may alternatively catalyze the reverse reaction, transferring glucose from cholesteryl 3-beta-D-glucoside to ceramide. Can also hydrolyze cholesteryl 3-beta-D-glucoside producing glucose and cholesterol. Catalyzes the hydrolysis of galactosylceramides/GalCers (such as beta-D-galactosyl-(1&lt;-&gt;1')-N-acylsphing-4-enine), as well as the transfer of galactose between GalCers and cholesterol in vitro, but with lower activity than with GlcCers. Contrary to GlcCer and GalCer, xylosylceramide/XylCer (such as beta-D-xyosyl-(1&lt;-&gt;1')-N-acylsphing-4-enine) is not a good substrate for hydrolysis, however it is a good xylose donor for transxylosylation activity to form cholesteryl 3-beta-D-xyloside. The polypeptide is Lysosomal acid glucosylceramidase (GBA1) (Sus scrofa (Pig)).